Consider the following 329-residue polypeptide: Delta(7)-sterol 5(6)-desaturase erg32 (329 aa).

A run of 2 helical transmembrane segments spans residues 67 to 87 (LFLI…SFAY) and 149 to 169 (FYLF…IYWI). One can recognise a Fatty acid hydroxylase domain in the interval 156–281 (ALFLLFSDFL…FFTLFDRLCS (126 aa)). The Histidine box-1 motif lies at 170–175 (HRALHH). Residues 183 to 187 (HKLHH) carry the Histidine box-2 motif. The helical transmembrane segment at 210-230 (LPYHMFPFFFPLNKYVYLLLF) threads the bilayer. Positions 257–262 (HHAAHH) match the Histidine box-3 motif.

The protein belongs to the sterol desaturase family. The cofactor is Fe cation.

It localises to the endoplasmic reticulum membrane. The protein localises to the golgi apparatus membrane. It catalyses the reaction episterol + 2 Fe(II)-[cytochrome b5] + O2 + 2 H(+) = 5-dehydroepisterol + 2 Fe(III)-[cytochrome b5] + 2 H2O. It participates in steroid metabolism; ergosterol biosynthesis. In terms of biological role, C-5 sterol desaturase; part of the third module of ergosterol biosynthesis pathway that includes by the late steps of the pathway. Erg31 and erg32 catalyze the introduction of a C-5 double bond in the B ring to produce 5-dehydroepisterol. The third module or late pathway involves the ergosterol synthesis itself through consecutive reactions that mainly occur in the endoplasmic reticulum (ER) membrane. Firstly, the squalene synthase erg9 catalyzes the condensation of 2 farnesyl pyrophosphate moieties to form squalene, which is the precursor of all steroids. Secondly, squalene is converted into lanosterol by the consecutive action of the squalene epoxidase erg1 and the lanosterol synthase erg7. The lanosterol 14-alpha-demethylase erg11/cyp1 catalyzes C14-demethylation of lanosterol to produce 4,4'-dimethyl cholesta-8,14,24-triene-3-beta-ol. In the next steps, a complex process involving various demethylation, reduction and desaturation reactions catalyzed by the C-14 reductase erg24 and the C-4 demethylation complex erg25-erg26-erg27 leads to the production of zymosterol. Erg28 likely functions in the C-4 demethylation complex reaction by tethering erg26 and Erg27 to the endoplasmic reticulum or to facilitate interaction between these proteins. Then, the sterol 24-C-methyltransferase erg6 catalyzes the methyl transfer from S-adenosyl-methionine to the C-24 of zymosterol to form fecosterol. The C-8 sterol isomerase erg2 catalyzes the reaction which results in unsaturation at C-7 in the B ring of sterols and thus converts fecosterol to episterol. The sterol-C5-desaturases erg31 and erg32 then catalyze the introduction of a C-5 double bond in the B ring to produce 5-dehydroepisterol. The C-22 sterol desaturase erg5 further converts 5-dehydroepisterol into ergosta-5,7,22,24(28)-tetraen-3beta-ol by forming the C-22(23) double bond in the sterol side chain. Finally, ergosta-5,7,22,24(28)-tetraen-3beta-ol is substrate of the C-24(28) sterol reductase erg4 to produce ergosterol. In the genus Schizosaccharomyces, a second route exists between lanosterol and fecosterol, via the methylation of lanosterol to eburicol by erg6, followed by C14-demethylation by erg11/cyp1 and C4-demethylation by the demethylation complex erg25-erg26-erg27. This is Delta(7)-sterol 5(6)-desaturase erg32 from Schizosaccharomyces pombe (strain 972 / ATCC 24843) (Fission yeast).